Here is a 183-residue protein sequence, read N- to C-terminus: Negative modulator of initiation of replication (183 aa).

The segment at valine 43–arginine 70 is disordered. Low complexity predominate over residues serine 50–alanine 61. 3 interaction with DNA regions span residues alanine 89–valine 90, arginine 118–tyrosine 122, and asparagine 152–lysine 158.

The protein belongs to the SeqA family. In terms of assembly, homodimer. Polymerizes to form helical filaments.

Its subcellular location is the cytoplasm. Its function is as follows. Negative regulator of replication initiation, which contributes to regulation of DNA replication and ensures that replication initiation occurs exactly once per chromosome per cell cycle. Binds to pairs of hemimethylated GATC sequences in the oriC region, thus preventing assembly of replication proteins and re-initiation at newly replicated origins. Repression is relieved when the region becomes fully methylated. In Pantoea ananatis (strain AJ13355), this protein is Negative modulator of initiation of replication.